The sequence spans 24 residues: MAPRGFSCLLLSTSEIDLPVKRRA.

The protein belongs to the humanin family.

Its subcellular location is the secreted. The protein resides in the cytoplasm. In terms of biological role, plays a role as a neuroprotective and antiapoptotic factor. The sequence is that of Humanin-like 12 from Homo sapiens (Human).